The chain runs to 131 residues: RxLR effector protein 62 (131 aa).

The signal sequence occupies residues 1–19; it reads MRLDILLFTLSSSTSLALS. Positions 49–60 match the RxLR-dEER motif; that stretch reads RHLREEPANEAR. The N-linked (GlcNAc...) asparagine glycan is linked to Asn61.

This sequence belongs to the RxLR effector family.

It localises to the secreted. The protein resides in the host cell. Secreted effector that suppresses callose deposition, a hallmark of pathogen-associated molecular pattern (PAMP)-triggered immunity (PTI) and renders host plants more susceptible to bacterial infection. Reduces host plant responsiveness to salicylic acid (SA) in haustoriated cells into which host-translocated effectors are delivered. In Hyaloperonospora arabidopsidis (strain Emoy2) (Downy mildew agent), this protein is RxLR effector protein 62.